A 76-amino-acid chain; its full sequence is Defensin-like protein 163 (76 aa).

The N-terminal stretch at 1–27 is a signal peptide; that stretch reads MAKLIYSYLFISMFVLSVLLALPNAEG. Cystine bridges form between Cys33–Cys76, Cys43–Cys62, Cys48–Cys70, and Cys52–Cys72.

Belongs to the DEFL family.

The protein resides in the secreted. This is Defensin-like protein 163 (LCR24) from Arabidopsis thaliana (Mouse-ear cress).